The following is a 430-amino-acid chain: Ribulose bisphosphate carboxylase (430 aa).

Residue K160 is the Proton acceptor of the active site. K162 lines the substrate pocket. Mg(2+) is bound by residues K186, D188, and E189. K186 is modified (N6-carboxylysine). H278 acts as the Proton acceptor in catalysis. Substrate contacts are provided by residues R279, H311, 348–350 (SGG), and 370–373 (QAGG).

The protein belongs to the RuBisCO large chain family. Type III subfamily. In terms of assembly, homodimer or homodecamer. In contrast to form I RuBisCO, the form III RuBisCO is composed solely of large subunits. It depends on Mg(2+) as a cofactor.

The enzyme catalyses 2 (2R)-3-phosphoglycerate + 2 H(+) = D-ribulose 1,5-bisphosphate + CO2 + H2O. It catalyses the reaction D-ribulose 1,5-bisphosphate + O2 = 2-phosphoglycolate + (2R)-3-phosphoglycerate + 2 H(+). Functionally, catalyzes the addition of molecular CO(2) and H(2)O to ribulose 1,5-bisphosphate (RuBP), generating two molecules of 3-phosphoglycerate (3-PGA). Functions in an archaeal AMP degradation pathway, together with AMP phosphorylase and R15P isomerase. This is Ribulose bisphosphate carboxylase from Pyrococcus horikoshii (strain ATCC 700860 / DSM 12428 / JCM 9974 / NBRC 100139 / OT-3).